Here is a 59-residue protein sequence, read N- to C-terminus: Cuticle protein 7 isoform c (59 aa).

Residue Gln-1 is modified to Pyrrolidone carboxylic acid.

The sequence is that of Cuticle protein 7 isoform c from Limulus polyphemus (Atlantic horseshoe crab).